A 387-amino-acid polypeptide reads, in one-letter code: Dual specificity protein phosphatase MPK-4 (387 aa).

Residues 1 to 15 show a composition bias toward polar residues; that stretch reads MEQSQSQRQAWPSSS. The tract at residues 1–27 is disordered; the sequence is MEQSQSQRQAWPSSSAGGGKAQDSGVL. The Tyrosine-protein phosphatase domain maps to 35 to 182; that stretch reads GPVSIDEVDT…LKLFRRMGCK (148 aa). The Phosphocysteine intermediate role is filled by C126. The tract at residues 248–267 is disordered; it reads LEHKPRDRPPQEVVPKEKEE.

Belongs to the protein-tyrosine phosphatase family. Non-receptor class dual specificity subfamily. Interacts (via tyrosine-protein phosphatase domain) with bsk/JNK; the interaction dephosphorylates bsk.

Its subcellular location is the nucleus. The protein resides in the cytoplasm. It catalyses the reaction O-phospho-L-tyrosyl-[protein] + H2O = L-tyrosyl-[protein] + phosphate. The enzyme catalyses O-phospho-L-seryl-[protein] + H2O = L-seryl-[protein] + phosphate. It carries out the reaction O-phospho-L-threonyl-[protein] + H2O = L-threonyl-[protein] + phosphate. With respect to regulation, inhibited by the tyrosine phosphatase inhibitor sodium vanadate. In terms of biological role, dual specificity phosphatase; can dephosphorylate both phosphotyrosine and phosphoserine or phosphothreonine residues. May suppress bsk/JNK activation during the immune response. This chain is Dual specificity protein phosphatase MPK-4, found in Drosophila melanogaster (Fruit fly).